The sequence spans 235 residues: Small ribosomal subunit protein uS3 (235 aa).

One can recognise a KH type-2 domain in the interval 39-107; that stretch reads VRKFLNKELA…PAQINIAEVK (69 aa).

This sequence belongs to the universal ribosomal protein uS3 family. In terms of assembly, part of the 30S ribosomal subunit. Forms a tight complex with proteins S10 and S14.

Binds the lower part of the 30S subunit head. Binds mRNA in the 70S ribosome, positioning it for translation. The chain is Small ribosomal subunit protein uS3 from Mannheimia succiniciproducens (strain KCTC 0769BP / MBEL55E).